The chain runs to 273 residues: Large ribosomal subunit protein uL2 (273 aa).

A disordered region spans residues 221-263; sequence RGTAMNPVDHPHGGGEGRNFGKHPVSPWGLQTKGKKTRKNKRT. Over residues 253–263 the composition is skewed to basic residues; it reads KGKKTRKNKRT.

The protein belongs to the universal ribosomal protein uL2 family. Part of the 50S ribosomal subunit. Forms a bridge to the 30S subunit in the 70S ribosome.

One of the primary rRNA binding proteins. Required for association of the 30S and 50S subunits to form the 70S ribosome, for tRNA binding and peptide bond formation. It has been suggested to have peptidyltransferase activity; this is somewhat controversial. Makes several contacts with the 16S rRNA in the 70S ribosome. In Buchnera aphidicola subsp. Baizongia pistaciae (strain Bp), this protein is Large ribosomal subunit protein uL2.